The sequence spans 102 residues: ATP-dependent Clp protease adapter protein ClpS (102 aa).

Belongs to the ClpS family. In terms of assembly, binds to the N-terminal domain of the chaperone ClpA.

Its function is as follows. Involved in the modulation of the specificity of the ClpAP-mediated ATP-dependent protein degradation. This chain is ATP-dependent Clp protease adapter protein ClpS, found in Shewanella sediminis (strain HAW-EB3).